A 227-amino-acid chain; its full sequence is Ribonuclease 3 (227 aa).

The 130-residue stretch at 4–133 folds into the RNase III domain; it reads FEKLETLLGY…LIAAIYLDSN (130 aa). Residue E46 participates in Mg(2+) binding. D50 is a catalytic residue. The Mg(2+) site is built by N119 and E122. Residue E122 is part of the active site. In terms of domain architecture, DRBM spans 158-226; it reads DPKTALQEWA…ARCLLHRLKN (69 aa).

Belongs to the ribonuclease III family. Homodimer. Mg(2+) serves as cofactor.

It is found in the cytoplasm. It catalyses the reaction Endonucleolytic cleavage to 5'-phosphomonoester.. Its function is as follows. Digests double-stranded RNA. Involved in the processing of primary rRNA transcript to yield the immediate precursors to the large and small rRNAs (23S and 16S). Processes some mRNAs, and tRNAs when they are encoded in the rRNA operon. Processes pre-crRNA and tracrRNA of type II CRISPR loci if present in the organism. The chain is Ribonuclease 3 from Rickettsia typhi (strain ATCC VR-144 / Wilmington).